The following is a 426-amino-acid chain: MLTIKDIHALEVMDSRGNPTIQASVVLSDNTKASAIVPSGASTGKREALELRDNDKTRFLGKGVLRACENVNSVIKHHLIGLEAINQAFVDERLRALDGTPNYANLGANAVLGVSMALARASAKALNLPLYRYLGGANALTLPVPMLNIINGGTHANNSIDFQEYMIMPLGFESFKEALRASAEVYHTLKKLLDGKNQLTSVGDEGGFAPNFSNNVEPLEVISQAIEKAGYKLGEEIALALDVASSELVDENFNYHLKGENKILDSHELVAYYKELVAKYPIVSIEDGLSEDDWEGWAFLSKELGRQIQLVGDDLFVTNASLLQKGIEKNIANAVLIKPNQIGTISETLETIRLAKHHAYQCVMSHRSGESEDSFIADFAVALNTGEIKTGSTARSERIAKYNRLLEIEHELKGGIYIGKELFKHG.

Position 163 (Q163) interacts with (2R)-2-phosphoglycerate. Residue E205 is the Proton donor of the active site. D242, E286, and D313 together coordinate Mg(2+). 4 residues coordinate (2R)-2-phosphoglycerate: K338, R367, S368, and K389. K338 acts as the Proton acceptor in catalysis.

This sequence belongs to the enolase family. Requires Mg(2+) as cofactor.

The protein resides in the cytoplasm. It is found in the secreted. Its subcellular location is the cell surface. It carries out the reaction (2R)-2-phosphoglycerate = phosphoenolpyruvate + H2O. It functions in the pathway carbohydrate degradation; glycolysis; pyruvate from D-glyceraldehyde 3-phosphate: step 4/5. Functionally, catalyzes the reversible conversion of 2-phosphoglycerate (2-PG) into phosphoenolpyruvate (PEP). It is essential for the degradation of carbohydrates via glycolysis. This chain is Enolase, found in Helicobacter pylori (strain ATCC 700392 / 26695) (Campylobacter pylori).